The primary structure comprises 466 residues: Alpha-1A adrenergic receptor (466 aa).

Topologically, residues 1–25 (MVFLSGNASDSSNCTQPPAPVNIPK) are extracellular. Residues asparagine 7 and asparagine 13 are each glycosylated (N-linked (GlcNAc...) asparagine). Residues 26–51 (AILLGVILGVLILFGVPGNILVILSV) form a helical membrane-spanning segment. The Cytoplasmic portion of the chain corresponds to 52–63 (ACHRHLHSVTHY). The chain crosses the membrane as a helical span at residues 64-89 (YIVNLAVADLLLTSTVLPFSAIFEIL). Topologically, residues 90-99 (GYWAFGRVFC) are extracellular. Residues 100 to 122 (NIWAAVDVLCCTASIMSLCIISI) traverse the membrane as a helical segment. Topologically, residues 123-143 (DRYIGVSYPLRYPTIVTQRRG) are cytoplasmic. Residues 144–168 (LRALLCLWALSLVISIGPLFGWRQP) form a helical membrane-spanning segment. The Extracellular portion of the chain corresponds to 169 to 181 (APQDETICQINED). The chain crosses the membrane as a helical span at residues 182-205 (PSYVLFSALGSFYVPLAIILVMYC). The Cytoplasmic segment spans residues 206–272 (RVYVVAKRES…KFSREKKAAK (67 aa)). The helical transmembrane segment at 273 to 297 (TLGIVVGCFVLCWLPFFLVMPIGSF) threads the bilayer. Residues 298–304 (FPDFKPS) are Extracellular-facing. Residues 305–329 (ETVFKIVFWLGYLNSCINPIIYPCS) form a helical membrane-spanning segment. Residues 330–466 (SQEFKKAFQN…ISLSENGEEV (137 aa)) lie on the Cytoplasmic side of the membrane. Positions 334–349 (KKAFQNVLKIQCLRRK) match the Nuclear localization signal motif. The S-palmitoyl cysteine moiety is linked to residue cysteine 345.

It belongs to the G-protein coupled receptor 1 family. Adrenergic receptor subfamily. ADRA1A sub-subfamily. As to quaternary structure, homo- and heterooligomer. Heterooligomerizes with ADRA1B homooligomers in cardiac myocytes. Interacts with CAVIN4.

It localises to the nucleus membrane. The protein resides in the cell membrane. It is found in the cytoplasm. The protein localises to the membrane. Its subcellular location is the caveola. In terms of biological role, this alpha-adrenergic receptor mediates its action by association with G proteins that activate a phosphatidylinositol-calcium second messenger system. Its effect is mediated by G(q) and G(11) proteins. Nuclear ADRA1A-ADRA1B heterooligomers regulate phenylephrine (PE)-stimulated ERK signaling in cardiac myocytes. The protein is Alpha-1A adrenergic receptor (ADRA1A) of Cavia porcellus (Guinea pig).